Reading from the N-terminus, the 214-residue chain is Small ribosomal subunit protein uS5 (214 aa).

An S5 DRBM domain is found at 54 to 117 (LKYEVMDIKI…KNAKMNIIPV (64 aa)).

Belongs to the universal ribosomal protein uS5 family. In terms of assembly, part of the 30S ribosomal subunit. Contacts protein S4.

Its function is as follows. With S4 and S12 plays an important role in translational accuracy. This Sulfurisphaera tokodaii (strain DSM 16993 / JCM 10545 / NBRC 100140 / 7) (Sulfolobus tokodaii) protein is Small ribosomal subunit protein uS5.